The primary structure comprises 662 residues: DNA topoisomerase 4 subunit B (662 aa).

Residues Tyr20, Asn60, Asp87, Gly129 to Ile135, and Lys359 each bind ATP. One can recognise a Toprim domain in the interval Thr439–Pro553. Mg(2+) is bound by residues Glu445, Asp518, and Asp520.

The protein belongs to the type II topoisomerase family. ParE type 1 subfamily. Heterotetramer composed of ParC and ParE. Mg(2+) is required as a cofactor. Mn(2+) serves as cofactor. It depends on Ca(2+) as a cofactor.

It catalyses the reaction ATP-dependent breakage, passage and rejoining of double-stranded DNA.. Functionally, topoisomerase IV is essential for chromosome segregation. It relaxes supercoiled DNA. Performs the decatenation events required during the replication of a circular DNA molecule. The sequence is that of DNA topoisomerase 4 subunit B from Rickettsia felis (strain ATCC VR-1525 / URRWXCal2) (Rickettsia azadi).